The sequence spans 131 residues: Large ribosomal subunit protein bL20 (131 aa).

The protein belongs to the bacterial ribosomal protein bL20 family.

Its function is as follows. Binds directly to 23S ribosomal RNA and is necessary for the in vitro assembly process of the 50S ribosomal subunit. It is not involved in the protein synthesizing functions of that subunit. The polypeptide is Large ribosomal subunit protein bL20 (Mycolicibacterium paratuberculosis (strain ATCC BAA-968 / K-10) (Mycobacterium paratuberculosis)).